The following is a 318-amino-acid chain: Putative HTH-type transcriptional regulatory protein MJ1164 (318 aa).

Residues 131–189 (LKEVREAMGISVGKLAEVAGVSRKAIYKYETQMANPSVDVALKIEEFLDVPLVKGIDLF) form the HTH cro/C1-type domain. Positions 142 to 161 (VGKLAEVAGVSRKAIYKYET) form a DNA-binding region, H-T-H motif.

This is Putative HTH-type transcriptional regulatory protein MJ1164 from Methanocaldococcus jannaschii (strain ATCC 43067 / DSM 2661 / JAL-1 / JCM 10045 / NBRC 100440) (Methanococcus jannaschii).